A 344-amino-acid chain; its full sequence is Small neutral protease regulatory protein (344 aa).

Residues 1–60 (MELEVRHLRALCAIADAGSLHRAARRLGVAQPTLSTQLTRIEQALGGPLFTRERTGCRPT) form the HTH lysR-type domain. A DNA-binding region (H-T-H motif) is located at residues 20-39 (LHRAARRLGVAQPTLSTQLT). The interval 322–344 (SCGRAEGSRSRRPRDVAPPRPIG) is disordered. Residues 327–338 (EGSRSRRPRDVA) are compositionally biased toward basic and acidic residues.

It belongs to the LysR transcriptional regulatory family.

Functionally, transcriptional activator of the gene (snpA) for the small neutral protease. In Streptomyces lividans, this protein is Small neutral protease regulatory protein (mprR).